A 479-amino-acid chain; its full sequence is Lactaldehyde dehydrogenase (479 aa).

Leu150 is a binding site for NAD(+). Arg161 lines the (S)-lactate pocket. Residues 176–179 (KPSE), Gln214, and Ser230 contribute to the NAD(+) site. A (S)-lactate-binding site is contributed by Glu251. Catalysis depends on residues Glu251 and Cys285. Position 286 (Asn286) interacts with (S)-lactate. Arg336 contacts NAD(+). 2 residues coordinate (S)-lactate: Glu443 and His449.

This sequence belongs to the aldehyde dehydrogenase family. In terms of assembly, homotetramer.

The catalysed reaction is (S)-lactaldehyde + NAD(+) + H2O = (S)-lactate + NADH + 2 H(+). The enzyme catalyses glycolaldehyde + NAD(+) + H2O = glycolate + NADH + 2 H(+). It participates in carbohydrate degradation; L-fucose degradation. The protein operates within carbohydrate degradation; L-rhamnose degradation. With respect to regulation, substrate inhibition is very strong with lactaldehyde, diminishing progressively with glycolaldehyde, glyceraldehyde or methylglyoxal. Inhibited by p-hydroxy mercuribenzoate and by some cations, including Mn(2+), Ca(2+), Cu(2+) and Zn(2+). Inhibited by NADH. Functionally, catalyzes the irreversible oxidation of L-lactaldehyde to L-lactate. Also shows high activity with glycolaldehyde and L-glyceraldehyde. Has weaker activity with various aldehydes such as methylglyoxal, propionaldehyde or benzaldehyde. Involved in the degradation of lactaldehyde produced during metabolism of L-fucose and L-rhamnose. It may be involved in several other metabolic pathways. The chain is Lactaldehyde dehydrogenase (aldA) from Escherichia coli (strain K12).